The following is a 213-amino-acid chain: ATP synthase peripheral stalk subunit OSCP, mitochondrial (213 aa).

Residues 1–23 constitute a mitochondrion transit peptide; sequence MATPAVSGLSRQVRCFSTSVVRP. Positions 5-23 match the SIFI-degron motif; it reads AVSGLSRQVRCFSTSVVRP. 4 positions are modified to N6-acetyllysine: Lys-54, Lys-60, Lys-70, and Lys-73. An N6-succinyllysine modification is found at Lys-90. N6-acetyllysine; alternate occurs at positions 158 and 162. An N6-succinyllysine; alternate mark is found at Lys-158 and Lys-162. 3 positions are modified to N6-acetyllysine: Lys-172, Lys-176, and Lys-192. At Lys-199 the chain carries N6-succinyllysine.

This sequence belongs to the ATPase delta chain family. In terms of assembly, component of the ATP synthase complex composed at least of ATP5F1A/subunit alpha, ATP5F1B/subunit beta, ATP5MC1/subunit c (homooctomer), MT-ATP6/subunit a, MT-ATP8/subunit 8, ATP5ME/subunit e, ATP5MF/subunit f, ATP5MG/subunit g, ATP5MK/subunit k, ATP5MJ/subunit j, ATP5F1C/subunit gamma, ATP5F1D/subunit delta, ATP5F1E/subunit epsilon, ATP5PF/subunit F6, ATP5PB/subunit b, ATP5PD/subunit d, ATP5PO/subunit OSCP. ATP synthase complex consists of a soluble F(1) head domain (subunits alpha(3) and beta(3)) - the catalytic core - and a membrane F(0) domain - the membrane proton channel (subunits c, a, 8, e, f, g, k and j). These two domains are linked by a central stalk (subunits gamma, delta, and epsilon) rotating inside the F1 region and a stationary peripheral stalk (subunits F6, b, d, and OSCP). Post-translationally, acetylation at Lys-162 decreases ATP production. Deacetylated by SIRT3. In terms of processing, in response to mitochondrial stress, the precursor protein is ubiquitinated by the SIFI complex in the cytoplasm before mitochondrial import, leading to its degradation. Within the SIFI complex, UBR4 initiates ubiquitin chain that are further elongated or branched by KCMF1.

It is found in the mitochondrion. It localises to the mitochondrion inner membrane. Subunit OSCP, of the mitochondrial membrane ATP synthase complex (F(1)F(0) ATP synthase or Complex V) that produces ATP from ADP in the presence of a proton gradient across the membrane which is generated by electron transport complexes of the respiratory chain. ATP synthase complex consist of a soluble F(1) head domain - the catalytic core - and a membrane F(1) domain - the membrane proton channel. These two domains are linked by a central stalk rotating inside the F(1) region and a stationary peripheral stalk. During catalysis, ATP synthesis in the catalytic domain of F(1) is coupled via a rotary mechanism of the central stalk subunits to proton translocation. In vivo, can only synthesize ATP although its ATP hydrolase activity can be activated artificially in vitro. Part of the complex F(0) domain. Part of the complex F(0) domain and the peripheric stalk, which acts as a stator to hold the catalytic alpha(3)beta(3) subcomplex and subunit a/ATP6 static relative to the rotary elements. This chain is ATP synthase peripheral stalk subunit OSCP, mitochondrial, found in Pongo abelii (Sumatran orangutan).